We begin with the raw amino-acid sequence, 98 residues long: Small ribosomal subunit protein uS19 (98 aa).

A disordered region spans residues 77–98 (TRTYRGHAGGKAEKGGAAPKRK).

It belongs to the universal ribosomal protein uS19 family.

Functionally, protein S19 forms a complex with S13 that binds strongly to the 16S ribosomal RNA. This chain is Small ribosomal subunit protein uS19, found in Chlorobium phaeovibrioides (strain DSM 265 / 1930) (Prosthecochloris vibrioformis (strain DSM 265)).